The sequence spans 307 residues: Small ribosomal subunit biogenesis GTPase RsgA (307 aa).

The CP-type G domain occupies 78-240; sequence HKTAFGHLIA…VIDTPGIKEL (163 aa). GTP is bound by residues 128 to 131 and 182 to 190; these read NKSD and GHSGVGKST. Zn(2+)-binding residues include Cys-264, Cys-269, His-271, and Cys-277.

Belongs to the TRAFAC class YlqF/YawG GTPase family. RsgA subfamily. In terms of assembly, monomer. Associates with 30S ribosomal subunit, binds 16S rRNA. Requires Zn(2+) as cofactor.

The protein resides in the cytoplasm. Functionally, one of several proteins that assist in the late maturation steps of the functional core of the 30S ribosomal subunit. Helps release RbfA from mature subunits. May play a role in the assembly of ribosomal proteins into the subunit. Circularly permuted GTPase that catalyzes slow GTP hydrolysis, GTPase activity is stimulated by the 30S ribosomal subunit. This Cytophaga hutchinsonii (strain ATCC 33406 / DSM 1761 / CIP 103989 / NBRC 15051 / NCIMB 9469 / D465) protein is Small ribosomal subunit biogenesis GTPase RsgA.